A 207-amino-acid polypeptide reads, in one-letter code: PITH domain-containing protein P35G2.02 (207 aa).

Residues 13-189 (EHPFESGPND…PVVTIYEATP (177 aa)) form the PITH domain.

Belongs to the PITHD1 family.

Its subcellular location is the cytoplasm. It localises to the nucleus. In Schizosaccharomyces pombe (strain 972 / ATCC 24843) (Fission yeast), this protein is PITH domain-containing protein P35G2.02.